A 344-amino-acid polypeptide reads, in one-letter code: MSNAITMGIFWHLIGAASAACFYAPFKQVKQWSWETMWSVGGIVSWLILPWAISALLLPDFWAYYGQFNLSTLLPVFLFGAMWGIGNINYGLTMRYLGMSMGIGIAIGITLIVGTLMTPIINGNFDVLIHTEGGRMTLLGVFVALIGVGIVTRAGQLKERKMGIKAEEFNLKKGLLLAVMCGIFSAGMSFAMNAAKPMHEAAAALGVDPLYVALPSYVVIMGGGALVNLGFCFIRLAKVQNLSIKADFSLSRPLIISNILLSALGGLMWYLQFFFYAWGHARIPAQYDYMSWMLHMSFYVLCGGLVGLVLKEWKNAGRRPVAVLSLGCVVIIIAANIVGLGMTS.

The next 10 membrane-spanning stretches (helical) occupy residues 4-24, 38-58, 68-88, 101-121, 137-157, 175-195, 214-234, 259-279, 290-310, and 321-341; these read AITM…CFYA, WSVG…ALLL, FNLS…IGNI, MGIG…TPII, TLLG…AGQL, LLLA…MNAA, LPSY…FCFI, ILLS…YAWG, MSWM…GLVL, and VAVL…VGLG.

It belongs to the L-rhamnose transporter (TC 2.A.7.6) family.

The protein resides in the cell inner membrane. The catalysed reaction is L-rhamnopyranose(in) + H(+)(in) = L-rhamnopyranose(out) + H(+)(out). Its function is as follows. Uptake of L-rhamnose across the cytoplasmic membrane with the concomitant transport of protons into the cell (symport system). This chain is L-rhamnose-proton symporter, found in Salmonella gallinarum (strain 287/91 / NCTC 13346).